The sequence spans 218 residues: Small ribosomal subunit protein uS3 (218 aa).

The KH type-2 domain maps to 38–106 (LRSDLKKKLM…PVHLNIEEVK (69 aa)).

It belongs to the universal ribosomal protein uS3 family. In terms of assembly, part of the 30S ribosomal subunit. Forms a tight complex with proteins S10 and S14.

Functionally, binds the lower part of the 30S subunit head. Binds mRNA in the 70S ribosome, positioning it for translation. The chain is Small ribosomal subunit protein uS3 from Legionella pneumophila (strain Lens).